Here is a 337-residue protein sequence, read N- to C-terminus: Succinylglutamate desuccinylase (337 aa).

Residues histidine 59, glutamate 62, and histidine 152 each contribute to the Zn(2+) site. Glutamate 216 is an active-site residue.

It belongs to the AspA/AstE family. Succinylglutamate desuccinylase subfamily. It depends on Zn(2+) as a cofactor.

It carries out the reaction N-succinyl-L-glutamate + H2O = L-glutamate + succinate. The protein operates within amino-acid degradation; L-arginine degradation via AST pathway; L-glutamate and succinate from L-arginine: step 5/5. In terms of biological role, transforms N(2)-succinylglutamate into succinate and glutamate. This Ectopseudomonas mendocina (strain ymp) (Pseudomonas mendocina) protein is Succinylglutamate desuccinylase.